Here is a 412-residue protein sequence, read N- to C-terminus: Cinnamoyl-CoA:phenyllactate CoA-transferase (412 aa).

Asparagine 102 is a binding site for CoA. Aspartate 176 functions as the Nucleophile in the catalytic mechanism.

Homodimer. Part of the heterotrimeric phenyllactate dehydratase complex FldABC, composed of (R)-phenyllactate CoA-transferase (FldA) and a heterodimeric (R)-phenyllactyl-CoA dehydratase (FldB and FldC).

It catalyses the reaction (E)-cinnamoyl-CoA + (R)-3-phenyllactate = (R)-3-phenyllactoyl-CoA + (E)-cinnamate. It functions in the pathway amino-acid degradation; L-phenylalanine degradation. Functionally, component of the phenyllactate dehydratase complex FldABC that is involved in the fermentation of L-phenylalanine via a Stickland reaction. This complex catalyzes the reversible syn-dehydration of (R)-phenyllactate to (E)-cinnamate in two steps, a CoA-transfer from cinnamoyl-CoA to phenyllactate, catalyzed by FldA, followed by the dehydration of phenyllactyl-CoA to cinnamoyl-CoA, catalyzed by FldB and FldC. In vitro, FldA can use 3-phenylpropanoate as a better CoA-acceptor than phenyllactate. The protein is Cinnamoyl-CoA:phenyllactate CoA-transferase of Clostridium sporogenes.